Consider the following 389-residue polypeptide: MVSVSEIRKAQRAEGPATILAIGTANPSNRVEQSTYPDFYFKITNSEHKVELKQKFQRMCDKSMIKSRYMYLTEEILKENPSVCEYMAPSLDVRQDMVVVEVPRLGKEAAVKAIKEWGQPKSKITHLIFCTTSGVDMPGADYQLTKLLGLRPYVKRYMMYQQGCFAGGTVLRLAKDLAENNKGARVLVVCSEVTAVTFRGPSDTHLDSLVGQALFGDGAAALIVGSDPIPEIEKPIFEMVWTAQTIAPDSEGAIDGHLREAGLTFHLLKDVPGIVSKNIDKALIEAFQPLNISDYNSIFWIAHPGGPAILDQVEEKLALKPEKMRATREVLSEYGNMSSACVLFILDEMRRKSAKDGLKTTGEGLEWGVLFGFGPGLTIETVVLHSVAI.

Cysteine 164 is an active-site residue.

It belongs to the thiolase-like superfamily. Chalcone/stilbene synthases family.

It catalyses the reaction (E)-4-coumaroyl-CoA + 3 malonyl-CoA + 3 H(+) = 2',4,4',6'-tetrahydroxychalcone + 3 CO2 + 4 CoA. It participates in secondary metabolite biosynthesis; flavonoid biosynthesis. In terms of biological role, the primary product of this enzyme is 4,2',4',6'-tetrahydroxychalcone (also termed naringenin-chalcone or chalcone) which can under specific conditions spontaneously isomerize into naringenin. The polypeptide is Chalcone synthase 1 (CHS1) (Cicer arietinum (Chickpea)).